Here is a 326-residue protein sequence, read N- to C-terminus: tRNA-modifying protein YgfZ (326 aa).

Folate-binding residues include Trp27 and Trp189.

Belongs to the tRNA-modifying YgfZ family.

The protein resides in the cytoplasm. In terms of biological role, folate-binding protein involved in regulating the level of ATP-DnaA and in the modification of some tRNAs. It is probably a key factor in regulatory networks that act via tRNA modification, such as initiation of chromosomal replication. This chain is tRNA-modifying protein YgfZ, found in Shigella boydii serotype 18 (strain CDC 3083-94 / BS512).